The sequence spans 204 residues: Nascent polypeptide-associated complex subunit alpha (204 aa).

The segment covering 1–19 has biased composition (basic and acidic residues); it reads MADPRVEELPDEEVPKANV. Disordered regions lie at residues 1-47 and 118-167; these read MADP…IHSR and QLAA…GLEA. Positions 22 to 32 are enriched in acidic residues; the sequence is AGSDSESEAGE. The 66-residue stretch at 46–111 folds into the NAC-A/B domain; the sequence is SRNEKKARKA…AKIEDLNSQA (66 aa). Over residues 118-128 the composition is skewed to low complexity; that stretch reads QLAAAEAAAGE. The span at 129–151 shows a compositional bias: basic and acidic residues; it reads HAGHDHDHDHGKGKAPETEAKKE. Over residues 152 to 164 the composition is skewed to acidic residues; the sequence is EEEDDGEEVDETG. Residues 165-204 enclose the UBA domain; that stretch reads LEAKDIELVMAQANVSRKKAVKALRENDNDIVNSIMALSI.

The protein belongs to the NAC-alpha family. Part of the nascent polypeptide-associated complex (NAC), consisting of egd2 and egd1. NAC associates with ribosomes via egd1.

The protein localises to the cytoplasm. Its subcellular location is the nucleus. Functionally, component of the nascent polypeptide-associated complex (NAC), a dynamic component of the ribosomal exit tunnel, protecting the emerging polypeptides from interaction with other cytoplasmic proteins to ensure appropriate nascent protein targeting. The NAC complex also promotes mitochondrial protein import by enhancing productive ribosome interactions with the outer mitochondrial membrane and blocks the inappropriate interaction of ribosomes translating non-secretory nascent polypeptides with translocation sites in the membrane of the endoplasmic reticulum. Egd2 may also be involved in transcription regulation. This chain is Nascent polypeptide-associated complex subunit alpha (egd2), found in Aspergillus fumigatus (strain ATCC MYA-4609 / CBS 101355 / FGSC A1100 / Af293) (Neosartorya fumigata).